The chain runs to 191 residues: Outer membrane lipoprotein DolP (191 aa).

Residues 1 to 18 (MKALSPIAVLISALLLQG) form the signal peptide. The N-palmitoyl cysteine moiety is linked to residue C19. C19 carries S-diacylglycerol cysteine lipidation. BON domains are found at residues 46 to 115 (DDGT…RQGQ) and 124 to 191 (NDTW…TFIK).

The protein belongs to the lipoprotein DolP family.

Its subcellular location is the cell outer membrane. Functionally, plays an important role in maintaining outer membrane integrity. The polypeptide is Outer membrane lipoprotein DolP (Escherichia coli O157:H7).